The sequence spans 848 residues: DNA mismatch repair protein MutS (848 aa).

605-612 provides a ligand contact to ATP; sequence GPNMAGKS.

This sequence belongs to the DNA mismatch repair MutS family.

Its function is as follows. This protein is involved in the repair of mismatches in DNA. It is possible that it carries out the mismatch recognition step. This protein has a weak ATPase activity. This is DNA mismatch repair protein MutS from Leptospira borgpetersenii serovar Hardjo-bovis (strain JB197).